We begin with the raw amino-acid sequence, 301 residues long: NAD kinase 2 (301 aa).

D77 functions as the Proton acceptor in the catalytic mechanism. NAD(+) contacts are provided by residues D77–G78, R82, N151–E152, K162, D181, and T192–S197.

Belongs to the NAD kinase family. Requires a divalent metal cation as cofactor.

It localises to the cytoplasm. It carries out the reaction NAD(+) + ATP = ADP + NADP(+) + H(+). Involved in the regulation of the intracellular balance of NAD and NADP, and is a key enzyme in the biosynthesis of NADP. Catalyzes specifically the phosphorylation on 2'-hydroxyl of the adenosine moiety of NAD to yield NADP. The protein is NAD kinase 2 of Streptomyces coelicolor (strain ATCC BAA-471 / A3(2) / M145).